The chain runs to 930 residues: Isoleucine--tRNA ligase (930 aa).

The disordered stretch occupies residues 1-21 (MRVKDTLNLGKTKFPMRGRLP). The 'HIGH' region signature appears at 57-67 (PYANGPIHIGH). L-isoleucyl-5'-AMP is bound at residue Glu-555. The 'KMSKS' region motif lies at 596–600 (KMSKS). Residue Lys-599 coordinates ATP. 4 residues coordinate Zn(2+): Cys-889, Cys-892, Cys-909, and Cys-912.

The protein belongs to the class-I aminoacyl-tRNA synthetase family. IleS type 1 subfamily. In terms of assembly, monomer. Zn(2+) is required as a cofactor.

Its subcellular location is the cytoplasm. The enzyme catalyses tRNA(Ile) + L-isoleucine + ATP = L-isoleucyl-tRNA(Ile) + AMP + diphosphate. Catalyzes the attachment of isoleucine to tRNA(Ile). As IleRS can inadvertently accommodate and process structurally similar amino acids such as valine, to avoid such errors it has two additional distinct tRNA(Ile)-dependent editing activities. One activity is designated as 'pretransfer' editing and involves the hydrolysis of activated Val-AMP. The other activity is designated 'posttransfer' editing and involves deacylation of mischarged Val-tRNA(Ile). The sequence is that of Isoleucine--tRNA ligase from Limosilactobacillus fermentum (strain NBRC 3956 / LMG 18251) (Lactobacillus fermentum).